Consider the following 78-residue polypeptide: Small ribosomal subunit protein bS20 (78 aa).

A disordered region spans residues 1 to 34 (MANIKSNLKRNKQNRARHTVVHSQTSAVKTQIKK). The span at 7–20 (NLKRNKQNRARHTV) shows a compositional bias: basic residues. Residues 21-34 (VHSQTSAVKTQIKK) show a composition bias toward polar residues.

The protein belongs to the bacterial ribosomal protein bS20 family.

Binds directly to 16S ribosomal RNA. In Malacoplasma penetrans (strain HF-2) (Mycoplasma penetrans), this protein is Small ribosomal subunit protein bS20.